The sequence spans 425 residues: Iron-sulfur cluster assembly factor IBA57 homolog, mitochondrial (425 aa).

Residues 1–28 (MPPRLRPGSVCSRCHFHRRSLSSTAFLA) constitute a mitochondrion transit peptide. The segment at 403 to 425 (RQRQTKEDVHRAKSGTEQIEEED) is disordered.

This sequence belongs to the GcvT family. CAF17/IBA57 subfamily.

It localises to the mitochondrion matrix. The chain is Iron-sulfur cluster assembly factor IBA57 homolog, mitochondrial (CAF17) from Coccidioides immitis (strain RS) (Valley fever fungus).